The sequence spans 298 residues: Type II methyltransferase M.MjaIV (298 aa).

It catalyses the reaction a 2'-deoxyadenosine in DNA + S-adenosyl-L-methionine = an N(6)-methyl-2'-deoxyadenosine in DNA + S-adenosyl-L-homocysteine + H(+). A methylase that recognizes the double-stranded sequence 5'-GTNNAC-3', methylates A-5 on both strands, and protects the DNA from cleavage by the MjaIV endonuclease. This is Type II methyltransferase M.MjaIV (mjaIVMP) from Methanocaldococcus jannaschii (strain ATCC 43067 / DSM 2661 / JAL-1 / JCM 10045 / NBRC 100440) (Methanococcus jannaschii).